A 210-amino-acid chain; its full sequence is Na(+)-translocating NADH-quinone reductase subunit D (210 aa).

The next 6 helical transmembrane spans lie at 11 to 31 (ILAPVLDNNPIALQVLGVCSA), 42 to 62 (FVMTIAVMFVTALSNFFVSLI), 72 to 92 (IIVQMAIIASLVIVVDQVLKA), 103 to 123 (VFVGLIITNCIVMGRAEAFAM), 131 to 151 (FIDGLGNGLGYGFVLITVGFF), and 178 to 198 (NGLMLLAPSAFFLIGFLIWAI).

This sequence belongs to the NqrDE/RnfAE family. In terms of assembly, composed of six subunits; NqrA, NqrB, NqrC, NqrD, NqrE and NqrF.

Its subcellular location is the cell inner membrane. The catalysed reaction is a ubiquinone + n Na(+)(in) + NADH + H(+) = a ubiquinol + n Na(+)(out) + NAD(+). Its function is as follows. NQR complex catalyzes the reduction of ubiquinone-1 to ubiquinol by two successive reactions, coupled with the transport of Na(+) ions from the cytoplasm to the periplasm. NqrA to NqrE are probably involved in the second step, the conversion of ubisemiquinone to ubiquinol. This chain is Na(+)-translocating NADH-quinone reductase subunit D, found in Vibrio atlanticus (strain LGP32) (Vibrio splendidus (strain Mel32)).